A 643-amino-acid polypeptide reads, in one-letter code: Phosphomethylpyrimidine synthase (643 aa).

Substrate is bound by residues N248, M277, Y306, H342, 362-364 (SRG), 403-406 (DGLR), and E442. Position 446 (H446) interacts with Zn(2+). Residue Y469 coordinates substrate. H510 is a binding site for Zn(2+). Positions 590, 593, and 598 each coordinate [4Fe-4S] cluster.

This sequence belongs to the ThiC family. As to quaternary structure, homodimer. [4Fe-4S] cluster serves as cofactor.

The catalysed reaction is 5-amino-1-(5-phospho-beta-D-ribosyl)imidazole + S-adenosyl-L-methionine = 4-amino-2-methyl-5-(phosphooxymethyl)pyrimidine + CO + 5'-deoxyadenosine + formate + L-methionine + 3 H(+). It participates in cofactor biosynthesis; thiamine diphosphate biosynthesis. Functionally, catalyzes the synthesis of the hydroxymethylpyrimidine phosphate (HMP-P) moiety of thiamine from aminoimidazole ribotide (AIR) in a radical S-adenosyl-L-methionine (SAM)-dependent reaction. This Burkholderia pseudomallei (strain 1106a) protein is Phosphomethylpyrimidine synthase.